Consider the following 297-residue polypeptide: uncharacterized protein (297 aa).

The next 4 helical transmembrane spans lie at aspartate 3–leucine 23, valine 38–leucine 58, isoleucine 103–leucine 123, and tyrosine 128–methionine 148.

The protein resides in the cell membrane. This is an uncharacterized protein from Bacillus subtilis (strain 168).